The sequence spans 430 residues: ETS domain-containing protein Elk-4 (430 aa).

Residues 5–85 (ITLWQFLLQL…NGQKFVYKFV (81 aa)) constitute a DNA-binding region (ETS). Basic and acidic residues predominate over residues 116-127 (SKDVEYGGKERP). A disordered region spans residues 116–138 (SKDVEYGGKERPPQPGAKTSSRN). Lys-166 is covalently cross-linked (Glycyl lysine isopeptide (Lys-Gly) (interchain with G-Cter in SUMO2)). Disordered stretches follow at residues 245 to 279 (TTFNPTPPVPSTPLPLKEPPRTPSPPLSSNPDIDT) and 292 to 325 (PENLSLEPKNEDSALPEKDKTNNSSRSKKPKGLE). Pro residues predominate over residues 249-272 (PTPPVPSTPLPLKEPPRTPSPPLS). Basic and acidic residues predominate over residues 299-312 (PKNEDSALPEKDKT).

Belongs to the ETS family. Interacts with SIRT7. As to expression, lung and liver.

It localises to the nucleus. Functionally, involved in both transcriptional activation and repression. Interaction with SIRT7 leads to recruitment and stabilization of SIRT7 at promoters, followed by deacetylation of histone H3 at 'Lys-18' (H3K18Ac) and subsequent transcription repression. Forms a ternary complex with the serum response factor (SRF). Requires DNA-bound SRF for ternary complex formation and makes extensive DNA contacts to the 5'side of SRF, but does not bind DNA autonomously. In Mus musculus (Mouse), this protein is ETS domain-containing protein Elk-4 (Elk4).